The following is a 406-amino-acid chain: Bifunctional enzyme IspD/IspF (406 aa).

The segment at 1 to 247 (MSLIRVNGEA…ALFFNPAKDT (247 aa)) is 2-C-methyl-D-erythritol 4-phosphate cytidylyltransferase. A 2-C-methyl-D-erythritol 2,4-cyclodiphosphate synthase region spans residues 248-406 (FIGMGFDTHA…HVSMRYKQKL (159 aa)). Positions 254 and 256 each coordinate a divalent metal cation. 4-CDP-2-C-methyl-D-erythritol 2-phosphate is bound by residues 254-256 (DTH) and 280-281 (HS). A divalent metal cation is bound at residue histidine 288. Residues 302-304 (DIG), 307-311 (FPDND), 378-381 (TTME), phenylalanine 385, and lysine 388 contribute to the 4-CDP-2-C-methyl-D-erythritol 2-phosphate site.

In the N-terminal section; belongs to the IspD/TarI cytidylyltransferase family. IspD subfamily. This sequence in the C-terminal section; belongs to the IspF family. Requires a divalent metal cation as cofactor.

It catalyses the reaction 2-C-methyl-D-erythritol 4-phosphate + CTP + H(+) = 4-CDP-2-C-methyl-D-erythritol + diphosphate. The catalysed reaction is 4-CDP-2-C-methyl-D-erythritol 2-phosphate = 2-C-methyl-D-erythritol 2,4-cyclic diphosphate + CMP. The protein operates within isoprenoid biosynthesis; isopentenyl diphosphate biosynthesis via DXP pathway; isopentenyl diphosphate from 1-deoxy-D-xylulose 5-phosphate: step 2/6. It participates in isoprenoid biosynthesis; isopentenyl diphosphate biosynthesis via DXP pathway; isopentenyl diphosphate from 1-deoxy-D-xylulose 5-phosphate: step 4/6. In terms of biological role, bifunctional enzyme that catalyzes the formation of 4-diphosphocytidyl-2-C-methyl-D-erythritol from CTP and 2-C-methyl-D-erythritol 4-phosphate (MEP) (IspD), and catalyzes the conversion of 4-diphosphocytidyl-2-C-methyl-D-erythritol 2-phosphate (CDP-ME2P) to 2-C-methyl-D-erythritol 2,4-cyclodiphosphate (ME-CPP) with a corresponding release of cytidine 5-monophosphate (CMP) (IspF). This chain is Bifunctional enzyme IspD/IspF, found in Helicobacter pylori (strain Shi470).